Consider the following 505-residue polypeptide: Apolipoprotein N-acyltransferase (505 aa).

The next 7 helical transmembrane spans lie at 6 to 26, 29 to 49, 53 to 73, 80 to 100, 119 to 139, 152 to 172, and 189 to 209; these read PSILVACILSFCLGAIGCLAF, FDIWLIAYLSAAGLIWAATLV, TAMLATFAWSIGYFGVGVQWV, FGGVPVIVSYLAVLLLASYLG, FVLASLFTFTEYLRGVVFTGF, PFAQLAPIFGVEGLTFLVILL, and TFTKIAVIIGFSLASNLLQFV. Positions 223 to 469 constitute a CN hydrolase domain; that stretch reads IQANIEQQLK…TNTLTAEIAT (247 aa). Catalysis depends on E263, which acts as the Proton acceptor. The active site involves K328. The active-site Nucleophile is the C379. Residues 475-495 form a helical membrane-spanning segment; that stretch reads LFGQFGHWLIYSLSFICVAFG.

Belongs to the CN hydrolase family. Apolipoprotein N-acyltransferase subfamily.

It localises to the cell inner membrane. It carries out the reaction N-terminal S-1,2-diacyl-sn-glyceryl-L-cysteinyl-[lipoprotein] + a glycerophospholipid = N-acyl-S-1,2-diacyl-sn-glyceryl-L-cysteinyl-[lipoprotein] + a 2-acyl-sn-glycero-3-phospholipid + H(+). Its pathway is protein modification; lipoprotein biosynthesis (N-acyl transfer). Its function is as follows. Catalyzes the phospholipid dependent N-acylation of the N-terminal cysteine of apolipoprotein, the last step in lipoprotein maturation. In Haemophilus ducreyi (strain 35000HP / ATCC 700724), this protein is Apolipoprotein N-acyltransferase.